A 196-amino-acid chain; its full sequence is Imidazoleglycerol-phosphate dehydratase (196 aa).

Belongs to the imidazoleglycerol-phosphate dehydratase family.

The protein localises to the cytoplasm. It catalyses the reaction D-erythro-1-(imidazol-4-yl)glycerol 3-phosphate = 3-(imidazol-4-yl)-2-oxopropyl phosphate + H2O. Its pathway is amino-acid biosynthesis; L-histidine biosynthesis; L-histidine from 5-phospho-alpha-D-ribose 1-diphosphate: step 6/9. This is Imidazoleglycerol-phosphate dehydratase from Caulobacter vibrioides (strain ATCC 19089 / CIP 103742 / CB 15) (Caulobacter crescentus).